Consider the following 957-residue polypeptide: Calsyntenin-3 (957 aa).

The N-terminal stretch at 1–19 (MTLLLVSLLLASLLQISSG) is a signal peptide. The Cytoplasmic portion of the chain corresponds to 1 to 21 (MTLLLVSLLLASLLQISSGNK). The Extracellular segment spans residues 20–848 (NKANKHKPWI…SHRNSMVPSA (829 aa)). Residues 22 to 42 (ANKHKPWIEAEYQGIVMENDN) constitute an intramembrane region (helical). Cadherin domains lie at 29 to 145 (IEAE…APVF) and 146 to 246 (VERL…KPSW). The Cytoplasmic segment spans residues 43-73 (TVLLNPPLFALDKDAPLRYAGEICGFRLHGS). Residues 74–94 (GVPFKAVILDKATGEGLIRAK) constitute an intramembrane region (helical). Over 95-139 (EPVDCEAQKEHTFTTQAYDCVDGPDGANTKKSHKATVHVRVNDVN) the chain is Cytoplasmic. An intramembrane region (helical) is located at residues 140-160 (EFAPVFVERLYRAAVTEGKLY). Topologically, residues 161-248 (DRILRVEAID…KPTCKPSWQG (88 aa)) are cytoplasmic. A helical transmembrane segment spans residues 249–269 (WNKRIEYAPGAGSLALFPGIR). The Lumenal portion of the chain corresponds to 270–357 (LETCDEPLWN…GTQAVQVPLG (88 aa)). N299, N327, N347, N508, and N741 each carry an N-linked (GlcNAc...) asparagine glycan. Residues 849–869 (ATLIIVVCVGFLVLMVILGLV) traverse the membrane as a helical segment. At 870–957 (RIHSLHRRVS…RIIESPPHRY (88 aa)) the chain is on the cytoplasmic side. Residues 916 to 957 (QQTGVAGVAGGQQEEEDSSDSEAADSPSSDERRIIESPPHRY) are disordered. A compositionally biased stretch (acidic residues) spans 928 to 938 (QEEEDSSDSEA). A compositionally biased stretch (basic and acidic residues) spans 944–957 (SDERRIIESPPHRY).

The protein belongs to the calsyntenin family. In terms of assembly, interacts (via cadherin domains) with both alpha and beta isoforms of neurexins (NRXN1, NRXN2 and NRXN3). Directly interacts with APBA2. Forms a tripartite complex with APBA2 and APP. Interacts with low affinity with KLC1. Interacts with SLC23A2/SVCT2. Interacts with CIDEA; inhibiting the lipid transferase activity of CIDEA. Interacts with CIDEC; inhibiting the lipid transferase activity of CIDEC. Proteolytically processed under normal cellular conditions. A primary zeta-cleavage generates a large extracellular (soluble) N-terminal domain (sAlc) and a short C-terminal transmembrane fragment (CTF1). A secondary cleavage catalyzed by gamma-secretase within the transmembrane domain releases the beta-Alc-beta chain in the extracellular milieu and produces an intracellular fragment (AlcICD). This processing is strongly suppressed in the tripartite complex formed with APBA2 and APP, which seems to prevent the association with gamma-secretase. In terms of processing, ubiquitinated: endoplasmic reticulum-localized protein is ubiquitinated and degraded by the endoplasmic reticulum-associated degradation (ERAD) pathway.

The protein resides in the postsynaptic cell membrane. Its subcellular location is the endoplasmic reticulum membrane. It localises to the golgi apparatus membrane. It is found in the cell projection. The protein localises to the dendrite. The protein resides in the lipid droplet. Its function is as follows. Postsynaptic adhesion molecule that binds to presynaptic neurexins to mediate both excitatory and inhibitory synapse formation. Promotes synapse development by acting as a cell adhesion molecule at the postsynaptic membrane, which associates with both neurexin-alpha and neurexin-beta proteins at the presynaptic membrane. Regulates the balance between excitatory and inhibitory synapses by inhibiting formation of excitatory parallel-fiber synapses and promoting formation of inhibitory synapses in the same neuron. May also be involved in ascorbate (vitamin C) uptake via its interaction with SLC23A2/SVCT2. Complex formation with APBA2 and APP, stabilizes APP metabolism and enhances APBA2-mediated suppression of beta-APP40 secretion, due to the retardation of intracellular APP maturation. In terms of biological role, adipose-specific isoform that plays a key role in adaptive thermogenesis. Facilitates the efficient use of stored triglyceride by promoting multilocular morphology of thermogenic adipocytes: acts by inhibiting the activity of CIDEA and CIDEC on lipid droplets, thereby preventing lipid droplet fusion and facilitating lipid utilization. May also participate in adaptive thermogenesis by promoting sympathetic innervation of thermogenic adipose tissue: acts by driving secretion of neurotrophic factor S100B from brown adipocytes, stimulating neurite outgrowth from sympathetic neurons. The chain is Calsyntenin-3 from Rattus norvegicus (Rat).